The primary structure comprises 665 residues: GRB2-associated-binding protein 2 (665 aa).

Ser-2 is modified (phosphoserine). In terms of domain architecture, PH spans 8–119 (DVVCTGWLRK…WVQSICQICG (112 aa)). The interval 131–184 (RNLSSASHGPRSSPAEFSSSQHLLRERKSSAPSHSSQPTLFTFEPPVSSHMQPT) is disordered. A phosphoserine mark is found at Ser-135, Ser-142, Ser-143, Ser-149, Ser-150, Ser-160, Ser-165, Ser-211, Ser-220, and Ser-261. Polar residues predominate over residues 160–170 (SAPSHSSQPTL). Thr-262 carries the phosphothreonine modification. Position 263 is a phosphotyrosine (Tyr-263). Thr-275 is modified (phosphothreonine). 2 positions are modified to phosphoserine: Ser-278 and Ser-282. Thr-284 is subject to Phosphothreonine. Phosphotyrosine is present on Tyr-290. Thr-328 carries the phosphothreonine modification. The segment at 338–396 (VATPGDSAIAPPPRPPKPSQAETSQWGSIQQRPPISENSRSVAATIPRRNTLPAMDNSR) is disordered. An SH3-binding motif is present at residues 348–355 (PPPRPPKP). Residues 357-379 (QAETSQWGSIQQRPPISENSRSV) are compositionally biased toward polar residues. Ser-365 bears the Phosphoserine mark. Phosphothreonine is present on residues Thr-382 and Thr-388. The residue at position 402 (Ser-402) is a Phosphoserine. The residue at position 405 (Thr-405) is a Phosphothreonine. Residues 408–445 (YPARGSGESASWSAEPPGKTAVGRSNSASSDDNYVPMN) form a disordered region. The residue at position 420 (Ser-420) is a Phosphoserine. The span at 430 to 439 (GRSNSASSDD) shows a compositional bias: polar residues. Position 441 is a phosphotyrosine (Tyr-441). Ser-469 is modified (phosphoserine). Residues 491–517 (PSRGSEIQPPPVNRNLKPDRKAKPTPL) form a disordered region. The short motif at 499–508 (PPPVNRNLKP) is the SH3-binding element. The residue at position 532 (Ser-532) is a Phosphoserine. Composition is skewed to polar residues over residues 548-566 (SSSQ…STDS) and 578-600 (NPVS…STGS). Disordered regions lie at residues 548–632 (SSSQ…KVDY) and 646–665 (TMQE…GAKL). Ser-612 carries the phosphoserine modification. Tyr-632 carries the phosphotyrosine modification. Polar residues predominate over residues 646–659 (TMQEWTDVRQSSEP).

Belongs to the GAB family. In terms of assembly, part of a complex composed of EEIG1, TNFRSF11A/RANK, PLCG2, GAB2, TEC and BTK; complex formation increases in the presence of TNFSF11/RANKL. Interacts with HCK. Interacts with SHC1; may mediate interaction with receptors. Interacts with SYK. Interacts with PI-3 kinase. Interacts with GRB2 (via SH3 2 domain). Interacts (phosphorylated) with PTPN11. Interacts with TNFRSF11A (via cytoplasmic domain). Interacts (phosphorylated) with 14-3-3 family proteins SFN, YWHAB, YWHAE, YWHAG, YWHAH, YWHAQ and YWHAZ; prevents interaction with GRB2 and attenuates GAB2 signaling. In terms of processing, phosphorylated upon EGF stimulation. Phosphorylated on tyrosine residues by HCK upon IL6 signaling. Phosphorylated on tyrosine residue(s) by the thrombopoietin receptor (TPOR), stem cell factor receptor (SCFR), and T-cell and B-cell antigen receptors, gp130, IL-2R and IL-3R. Phosphorylated upon stimulation of TNFRSF11A/RANK by TNFSF11/RANKL. Post-translationally, dephosphorylated by PTPN11. As to expression, ubiquitously expressed.

It is found in the cytoplasm. The protein localises to the cell membrane. It localises to the membrane raft. Functionally, adapter protein which acts downstream of several membrane receptors including cytokine, antigen, hormone, cell matrix and growth factor receptors to regulate multiple signaling pathways. Regulates osteoclast differentiation mediating the TNFRSF11A/RANK signaling. In allergic response, it plays a role in mast cells activation and degranulation through PI-3-kinase regulation. Also involved in the regulation of cell proliferation and hematopoiesis. The chain is GRB2-associated-binding protein 2 (Gab2) from Mus musculus (Mouse).